The chain runs to 644 residues: MAGFYRYDQNLDKYVPMPVELLASEGEEYTAPKITQKFNEVETKTTEILNKVLTDDRYFTVTSSFKQDATLGIEYYVTKVTPKTTEAKKSMVQKTFAYDFEKSIDPTSSYFGTTNRETVLSMAKRKRSVVAINASGWRSNGEVMGLQIKDGVLYKDYDAAGYTGAEACVFFDDGTMKVYGNREVDADILISKGARNSFAFGIWLVKDSKPRTAQMTTWADLNVKHPRQAIGQRSDGTLVIITVDGRSLRSSGITAYDMPSLFLSEGCINAFLLDGGGSSQTAVEGKYINNISDGIERAVVDTLTISYPDDDTDSRFFEVQEGRGLATSLNRRVEFIESKPTWNVLDLGFSPDGLIDNTAKFKKALSDLSEKGGGKLHFPKGTYLIGKQNTTSASEKIELPSNVSIVGERRSYTKLLRNPNHSLDELLRITDHNYIEGIEIDGNSSVNKSSCRLIAGGNIKSFKMKDCSLVNATDRGVSIHGIGKSITIEGMYISNIANECINVAEGEIIKLIDSEITFSGTALWVGNAANIFTKNNLAKSLKTFVRYKNSQNAICSGNIITNNIDRAIWGSVREAVFSDNVFKQCHSDYHLYFIQEDTGTNDLIVTGNSVYSDVEGTAFIRTPSDIDRRRVSGNVGNIPSLNLD.

This is SPbeta prophage-derived uncharacterized protein YomE (yomE) from Bacillus subtilis (strain 168).